The following is a 918-amino-acid chain: Dual serine/threonine and tyrosine protein kinase (918 aa).

Over residues 1–19 (MQKDGTRSSRRMEEGDRRN) the composition is skewed to basic and acidic residues. The interval 1–29 (MQKDGTRSSRRMEEGDRRNGSTGSSGSVS) is disordered. The 255-residue stretch at 643–897 (PRIGRELGRG…PLMGIVQPML (255 aa)) folds into the Protein kinase domain. ATP-binding positions include 649–657 (LGRGQYGVV) and lysine 672. The active-site Proton acceptor is aspartate 768.

This sequence belongs to the protein kinase superfamily. Ser/Thr protein kinase family.

The protein localises to the cytoplasm. It localises to the cell membrane. The protein resides in the apical cell membrane. Its subcellular location is the basolateral cell membrane. It is found in the cell junction. It catalyses the reaction L-seryl-[protein] + ATP = O-phospho-L-seryl-[protein] + ADP + H(+). It carries out the reaction L-threonyl-[protein] + ATP = O-phospho-L-threonyl-[protein] + ADP + H(+). The catalysed reaction is L-tyrosyl-[protein] + ATP = O-phospho-L-tyrosyl-[protein] + ADP + H(+). In terms of biological role, may act as a positive regulator of ERK phosphorylation downstream of fibroblast growth factor-receptor activation. May induce both caspase-dependent apoptosis and caspase-independent cell death. May play a role in the embryonic development. In Xenopus tropicalis (Western clawed frog), this protein is Dual serine/threonine and tyrosine protein kinase (dstyk).